The primary structure comprises 515 residues: SWI/SNF-related matrix-associated actin-dependent regulator of chromatin subfamily D member 1 (515 aa).

The interval 1–103 (MAARAGFQSV…SGMDQSRKRP (103 aa)) is disordered. A compositionally biased stretch (gly residues) spans 14 to 23 (GGAGASGGAG). Residues 43–167 (APGQGLYRSP…DQTIMRKRLD (125 aa)) form an interaction with ESR1, NR1H4, NR3C1, PGR and SMARCA4 region. An asymmetric dimethylarginine mark is found at arginine 68 and arginine 88. Residue lysine 101 forms a Glycyl lysine isopeptide (Lys-Gly) (interchain with G-Cter in SUMO2) linkage. Residues 168-474 (IQEALKRPIK…TMTDVVGNPE (307 aa)) form an interaction with SMARCC1 and SMARCC2 region. The tract at residues 180-515 (RKLRIFISNT…LEQALGIRNT (336 aa)) is necessary for GR/NR3C1-mediated remodeling and transcription from chromatin; required for GR/NR3C1 interaction with the BRG1/SMARCA4 complex in vivo. Threonine 203 is subject to Phosphothreonine. Residue lysine 223 is modified to N6-acetyllysine. One can recognise an SWIB/MDM2 domain in the interval 290-367 (YQPPQFKLDP…PQRLHALLMP (78 aa)). A coiled-coil region spans residues 412–440 (ASQQEIATLDNKIHETIETINQLKTQREF).

The protein belongs to the SMARCD family. Component of the multiprotein chromatin-remodeling complexes SWI/SNF: SWI/SNF-A (BAF), SWI/SNF-B (PBAF) and related complexes. The canonical complex contains a catalytic subunit (either SMARCA4/BRG1/BAF190A or SMARCA2/BRM/BAF190B), and at least SMARCE1, ACTL6A/BAF53, SMARCC1/BAF155, SMARCC2/BAF170, and SMARCB1/SNF5/BAF47. Other subunits specific to each of the complexes may also be present permitting several possible combinations developmentally and tissue specific. Component of the BAF complex, which includes at least actin (ACTB), ARID1A/BAF250A, ARID1B/BAF250B, SMARCA2/BRM, SMARCA4/BRG1/BAF190A, ACTL6A/BAF53, ACTL6B/BAF53B, SMARCE1/BAF57, SMARCC1/BAF155, SMARCC2/BAF170, SMARCB1/SNF5/INI1, and one or more SMARCD1/BAF60A, SMARCD2/BAF60B, or SMARCD3/BAF60C. In muscle cells, the BAF complex also contains DPF3. Component of neural progenitors-specific chromatin remodeling complex (npBAF complex) composed of at least, ARID1A/BAF250A or ARID1B/BAF250B, SMARCD1/BAF60A, SMARCD3/BAF60C, SMARCA2/BRM/BAF190B, SMARCA4/BRG1/BAF190A, SMARCB1/BAF47, SMARCC1/BAF155, SMARCE1/BAF57, SMARCC2/BAF170, PHF10/BAF45A, ACTL6A/BAF53A and actin. Component of neuron-specific chromatin remodeling complex (nBAF complex) composed of at least, ARID1A/BAF250A or ARID1B/BAF250B, SMARCD1/BAF60A, SMARCD3/BAF60C, SMARCA2/BRM/BAF190B, SMARCA4/BRG1/BAF190A, SMARCB1/BAF47, SMARCC1/BAF155, SMARCE1/BAF57, SMARCC2/BAF170, DPF1/BAF45B, DPF3/BAF45C, ACTL6B/BAF53B and actin. Component of the SWI/SNF-B (PBAF) chromatin remodeling complex, at least composed of SMARCA4/BRG1, SMARCB1/BAF47/SNF5, ACTL6A/BAF53A or ACTL6B/BAF53B, SMARCE1/BAF57, SMARCD1/BAF60A, SMARCD2/BAF60B, perhaps SMARCD3/BAF60C, SMARCC1/BAF155, SMARCC2/BAF170, PBRM1/BAF180, ARID2/BAF200 and actin (ACTB). Component of SWI/SNF (GBAF) subcomplex, which includes at least BICRA or BICRAL (mutually exclusive), BRD9, SS18, SMARCA2/BRM, SMARCA4/BRG1/BAF190A, ACTL6A/BAF53, SMARCC1/BAF155, and SMARCD1/BAF60A. Specifically interacts with the VDR heterodimer complex. Interacts with ESR1, NR3C1, NR1H4, PGR, SMARCA4, SMARCC1 and SMARCC2. Interacts with DPF2. Interacts with DPF3a (isoform 2 of DPF3/BAF45C) and with HDGFL2 in a DPF3a-dependent manner. Interacts with FOS, FOSB isoform 1 and 2, FOSL1 and FOSL2. In terms of tissue distribution, expressed in all tissues tested, including brain, heart, kidney, liver, lung, muscle, pancreas and placenta.

It localises to the nucleus. Functionally, involved in transcriptional activation and repression of select genes by chromatin remodeling (alteration of DNA-nucleosome topology). Component of SWI/SNF chromatin remodeling complexes that carry out key enzymatic activities, changing chromatin structure by altering DNA-histone contacts within a nucleosome in an ATP-dependent manner. Belongs to the neural progenitors-specific chromatin remodeling complex (npBAF complex) and the neuron-specific chromatin remodeling complex (nBAF complex). During neural development a switch from a stem/progenitor to a postmitotic chromatin remodeling mechanism occurs as neurons exit the cell cycle and become committed to their adult state. The transition from proliferating neural stem/progenitor cells to postmitotic neurons requires a switch in subunit composition of the npBAF and nBAF complexes. As neural progenitors exit mitosis and differentiate into neurons, npBAF complexes which contain ACTL6A/BAF53A and PHF10/BAF45A, are exchanged for homologous alternative ACTL6B/BAF53B and DPF1/BAF45B or DPF3/BAF45C subunits in neuron-specific complexes (nBAF). The npBAF complex is essential for the self-renewal/proliferative capacity of the multipotent neural stem cells. The nBAF complex along with CREST plays a role regulating the activity of genes essential for dendrite growth. Has a strong influence on vitamin D-mediated transcriptional activity from an enhancer vitamin D receptor element (VDRE). May be a link between mammalian SWI-SNF-like chromatin remodeling complexes and the vitamin D receptor (VDR) heterodimer. Mediates critical interactions between nuclear receptors and the BRG1/SMARCA4 chromatin-remodeling complex for transactivation. Interacts with AKIRIN2. The chain is SWI/SNF-related matrix-associated actin-dependent regulator of chromatin subfamily D member 1 from Homo sapiens (Human).